Reading from the N-terminus, the 1165-residue chain is Symplekin (1165 aa).

5 HEAT repeats span residues 23 to 58, 61 to 95, 98 to 140, 147 to 186, and 218 to 257; these read TATARAKVVDWCNELVIASPSTKCELLAKVQETVLG, AELAEEFLESVLSLAHDSNMEVRKQVVAFVEQVCK, VELL…YLCS, SAEQAWNILSLIKAQILDMIDNENDGIRTNAIKFLEGVVV, and KLQEEGNNILDILLQFHGTTHISSVNLIACTSSLCTIAKM. The tract at residues 365–384 is disordered; the sequence is DQQQREMELDTEELERQKQK. A compositionally biased stretch (basic and acidic residues) spans 367-384; it reads QQREMELDTEELERQKQK.

It belongs to the Symplekin family. Interacts with Cpsf73 and Cpsf100 forming a core cleavage factor required for both polyadenylated and histone mRNA processing. Interacts with Slbp and Lsm11.

It localises to the nucleus. In terms of biological role, component of a protein complex required for cotranscriptional processing of 3'-ends of polyadenylated and histone pre-mRNA. Involved in germline stem cell transit amplification, differentiation and mitosis-to-meiosis transition. The chain is Symplekin from Drosophila melanogaster (Fruit fly).